The sequence spans 272 residues: ATP synthase subunit a (272 aa).

7 helical membrane-spanning segments follow: residues 39-59, 103-123, 124-144, 152-172, 181-201, 221-241, and 242-262; these read GFWA…LIFI, VAPL…LKWI, PVDY…KIVP, FGIS…VKGV, FTPF…IIGL, VVFI…NVPW, and AIFH…LTVV.

Belongs to the ATPase A chain family. In terms of assembly, F-type ATPases have 2 components, CF(1) - the catalytic core - and CF(0) - the membrane proton channel. CF(1) has five subunits: alpha(3), beta(3), gamma(1), delta(1), epsilon(1). CF(0) has three main subunits: a(1), b(2) and c(9-12). The alpha and beta chains form an alternating ring which encloses part of the gamma chain. CF(1) is attached to CF(0) by a central stalk formed by the gamma and epsilon chains, while a peripheral stalk is formed by the delta and b chains.

It localises to the cell inner membrane. In terms of biological role, key component of the proton channel; it plays a direct role in the translocation of protons across the membrane. The chain is ATP synthase subunit a from Ectopseudomonas mendocina (strain ymp) (Pseudomonas mendocina).